A 336-amino-acid polypeptide reads, in one-letter code: Gibberellin 2-beta-dioxygenase 7 (336 aa).

A Fe2OG dioxygenase domain is found at 191-291; the sequence is LENSFLRLNK…RMSIAFFVCP (101 aa). Fe cation contacts are provided by H216, D218, and H272. R282 is an active-site residue. R282 contacts 2-oxoglutarate.

It belongs to the iron/ascorbate-dependent oxidoreductase family. GA2OX subfamily. It depends on Fe(2+) as a cofactor.

It catalyses the reaction gibberellin A1 + 2-oxoglutarate + O2 = gibberellin A8 + succinate + CO2. It functions in the pathway plant hormone biosynthesis; gibberellin biosynthesis. Functionally, catalyzes the 2-beta-hydroxylation of gibberellins (GA) precursors, rendering them unable to be converted to active GAs. Hydroxylates the C20-GA GA12 and GA53, but is not active on C19-GAs, like GA1, GA4, GA9 and GA20. This is Gibberellin 2-beta-dioxygenase 7 (GA2OX7) from Arabidopsis thaliana (Mouse-ear cress).